The chain runs to 201 residues: Small ribosomal subunit protein uS4c (201 aa).

The 62-residue stretch at 89 to 150 (MRLDNIVFRL…RQKSQAIITK (62 aa)) folds into the S4 RNA-binding domain.

The protein belongs to the universal ribosomal protein uS4 family. As to quaternary structure, part of the 30S ribosomal subunit. Contacts protein S5. The interaction surface between S4 and S5 is involved in control of translational fidelity.

The protein localises to the plastid. Its subcellular location is the chloroplast. Its function is as follows. One of the primary rRNA binding proteins, it binds directly to 16S rRNA where it nucleates assembly of the body of the 30S subunit. Functionally, with S5 and S12 plays an important role in translational accuracy. The polypeptide is Small ribosomal subunit protein uS4c (rps4) (Physcomitrium patens (Spreading-leaved earth moss)).